A 360-amino-acid chain; its full sequence is Phospho-N-acetylmuramoyl-pentapeptide-transferase (360 aa).

The next 10 membrane-spanning stretches (helical) occupy residues 26–46 (AILG…KMIA), 73–93 (TMGG…WGDL), 97–117 (YVWV…IDDY), 132–152 (WKYL…YASA), 168–188 (VMPQ…VGSS), 199–219 (GLAI…AYLS), 236–256 (AGEL…FLWF), 263–283 (VFMG…IAVL), 288–308 (ILLV…ILQV), and 338–358 (VIVR…ATLK).

Belongs to the glycosyltransferase 4 family. MraY subfamily. It depends on Mg(2+) as a cofactor.

Its subcellular location is the cell inner membrane. It carries out the reaction UDP-N-acetyl-alpha-D-muramoyl-L-alanyl-gamma-D-glutamyl-meso-2,6-diaminopimeloyl-D-alanyl-D-alanine + di-trans,octa-cis-undecaprenyl phosphate = di-trans,octa-cis-undecaprenyl diphospho-N-acetyl-alpha-D-muramoyl-L-alanyl-D-glutamyl-meso-2,6-diaminopimeloyl-D-alanyl-D-alanine + UMP. It functions in the pathway cell wall biogenesis; peptidoglycan biosynthesis. Its function is as follows. Catalyzes the initial step of the lipid cycle reactions in the biosynthesis of the cell wall peptidoglycan: transfers peptidoglycan precursor phospho-MurNAc-pentapeptide from UDP-MurNAc-pentapeptide onto the lipid carrier undecaprenyl phosphate, yielding undecaprenyl-pyrophosphoryl-MurNAc-pentapeptide, known as lipid I. The protein is Phospho-N-acetylmuramoyl-pentapeptide-transferase of Shewanella halifaxensis (strain HAW-EB4).